Here is a 220-residue protein sequence, read N- to C-terminus: Adenylate kinase (220 aa).

10–15 (GAGKGT) contacts ATP. Residues 30 to 59 (STGDMLRAAVKAGTPLGVEAKGYMDAGKLV) are NMP. AMP contacts are provided by residues Thr-31, Arg-36, 57-59 (KLV), 85-88 (GFPR), and Gln-92. The interval 122-159 (GRRTHPASGRTYHVKFNPPKVEGKDDVTGEPLIQRDDD) is LID. Residues Arg-123 and 132–133 (TY) each bind ATP. AMP contacts are provided by Arg-156 and Arg-167. Gly-206 lines the ATP pocket.

This sequence belongs to the adenylate kinase family. In terms of assembly, monomer.

The protein resides in the cytoplasm. The enzyme catalyses AMP + ATP = 2 ADP. It functions in the pathway purine metabolism; AMP biosynthesis via salvage pathway; AMP from ADP: step 1/1. Catalyzes the reversible transfer of the terminal phosphate group between ATP and AMP. Plays an important role in cellular energy homeostasis and in adenine nucleotide metabolism. The protein is Adenylate kinase of Burkholderia multivorans (strain ATCC 17616 / 249).